Consider the following 614-residue polypeptide: Dihydroxy-acid dehydratase (614 aa).

Asp81 is a binding site for Mg(2+). Cys122 is a [2Fe-2S] cluster binding site. Mg(2+) is bound by residues Asp123 and Lys124. N6-carboxylysine is present on Lys124. Cys195 is a [2Fe-2S] cluster binding site. Glu491 lines the Mg(2+) pocket. Catalysis depends on Ser517, which acts as the Proton acceptor.

The protein belongs to the IlvD/Edd family. In terms of assembly, homodimer. [2Fe-2S] cluster is required as a cofactor. Mg(2+) serves as cofactor.

It catalyses the reaction (2R)-2,3-dihydroxy-3-methylbutanoate = 3-methyl-2-oxobutanoate + H2O. The enzyme catalyses (2R,3R)-2,3-dihydroxy-3-methylpentanoate = (S)-3-methyl-2-oxopentanoate + H2O. The protein operates within amino-acid biosynthesis; L-isoleucine biosynthesis; L-isoleucine from 2-oxobutanoate: step 3/4. It functions in the pathway amino-acid biosynthesis; L-valine biosynthesis; L-valine from pyruvate: step 3/4. Functionally, functions in the biosynthesis of branched-chain amino acids. Catalyzes the dehydration of (2R,3R)-2,3-dihydroxy-3-methylpentanoate (2,3-dihydroxy-3-methylvalerate) into 2-oxo-3-methylpentanoate (2-oxo-3-methylvalerate) and of (2R)-2,3-dihydroxy-3-methylbutanoate (2,3-dihydroxyisovalerate) into 2-oxo-3-methylbutanoate (2-oxoisovalerate), the penultimate precursor to L-isoleucine and L-valine, respectively. In Nitrobacter winogradskyi (strain ATCC 25391 / DSM 10237 / CIP 104748 / NCIMB 11846 / Nb-255), this protein is Dihydroxy-acid dehydratase.